Reading from the N-terminus, the 64-residue chain is Large ribosomal subunit protein uL30 (64 aa).

This sequence belongs to the universal ribosomal protein uL30 family. As to quaternary structure, part of the 50S ribosomal subunit.

The sequence is that of Large ribosomal subunit protein uL30 from Bradyrhizobium diazoefficiens (strain JCM 10833 / BCRC 13528 / IAM 13628 / NBRC 14792 / USDA 110).